A 295-amino-acid polypeptide reads, in one-letter code: Ribosomal RNA small subunit methyltransferase A (295 aa).

Residues Asn-40, Val-42, Gly-67, Glu-88, Asp-118, and Asn-135 each coordinate S-adenosyl-L-methionine.

This sequence belongs to the class I-like SAM-binding methyltransferase superfamily. rRNA adenine N(6)-methyltransferase family. RsmA subfamily.

The protein localises to the cytoplasm. It carries out the reaction adenosine(1518)/adenosine(1519) in 16S rRNA + 4 S-adenosyl-L-methionine = N(6)-dimethyladenosine(1518)/N(6)-dimethyladenosine(1519) in 16S rRNA + 4 S-adenosyl-L-homocysteine + 4 H(+). In terms of biological role, specifically dimethylates two adjacent adenosines (A1518 and A1519) in the loop of a conserved hairpin near the 3'-end of 16S rRNA in the 30S particle. May play a critical role in biogenesis of 30S subunits. In Arthrobacter sp. (strain FB24), this protein is Ribosomal RNA small subunit methyltransferase A.